Here is a 341-residue protein sequence, read N- to C-terminus: tRNA N6-adenosine threonylcarbamoyltransferase (341 aa).

Fe cation is bound by residues histidine 115 and histidine 119. Substrate-binding positions include 138–142 (LVSGG), aspartate 171, glycine 184, and asparagine 276. A Fe cation-binding site is contributed by aspartate 304.

Belongs to the KAE1 / TsaD family. The cofactor is Fe(2+).

It localises to the cytoplasm. It carries out the reaction L-threonylcarbamoyladenylate + adenosine(37) in tRNA = N(6)-L-threonylcarbamoyladenosine(37) in tRNA + AMP + H(+). Functionally, required for the formation of a threonylcarbamoyl group on adenosine at position 37 (t(6)A37) in tRNAs that read codons beginning with adenine. Is involved in the transfer of the threonylcarbamoyl moiety of threonylcarbamoyl-AMP (TC-AMP) to the N6 group of A37, together with TsaE and TsaB. TsaD likely plays a direct catalytic role in this reaction. This chain is tRNA N6-adenosine threonylcarbamoyltransferase, found in Stenotrophomonas maltophilia (strain R551-3).